Here is a 322-residue protein sequence, read N- to C-terminus: Cysteine protease yopT1 (322 aa).

Residues cysteine 139, histidine 258, and aspartate 274 contribute to the active site.

It belongs to the peptidase C58 family. In terms of assembly, interacts with human ARHA.

Its subcellular location is the secreted. Cysteine protease, which is translocated into infected cells and plays a central role in pathogenesis by cleaving the C-terminus end of the human small GTPase RhoA/ARHA, a regulator of cytoskeleton. Once cleaved, ARHA loses its lipid modification, and is released from the cell membrane, leading to the subsequent disruption of actin cytoskeleton of the host cell. The chain is Cysteine protease yopT1 (yopT1) from Yersinia enterocolitica.